Here is a 571-residue protein sequence, read N- to C-terminus: Ubiquitin-like-specific protease 1C (571 aa).

Residues 221–260 are disordered; that stretch reads SESKDPKGDRRPNEAYGKGKPNESSPYLLVDDDDGDDDKV. Residues 222–233 show a composition bias toward basic and acidic residues; sequence ESKDPKGDRRPN. Active-site residues include His-426, Asp-449, and Cys-512.

Belongs to the peptidase C48 family.

The protein resides in the nucleus. It is found in the nucleoplasm. Functionally, protease that catalyzes two essential functions in the SUMO pathway: processing of full-length SUMOs to their mature forms and deconjugation of SUMO from targeted proteins. Cleaves precursors of SUM1 and SUM2, but not of SUM3 or SUM5. Able to release SUM1 and SUM2 from conjugates, but unable to cleave SUM3. Protease activity mainly directed at deconjugating SUM1 and SUM2 from their target proteins. Regulates salt stress responses and flowering time. Redundant with ULP1D. The polypeptide is Ubiquitin-like-specific protease 1C (ULP1C) (Arabidopsis thaliana (Mouse-ear cress)).